A 302-amino-acid chain; its full sequence is tRNA pseudouridine synthase B (302 aa).

The active-site Nucleophile is the D47.

Belongs to the pseudouridine synthase TruB family. Type 1 subfamily.

It carries out the reaction uridine(55) in tRNA = pseudouridine(55) in tRNA. Responsible for synthesis of pseudouridine from uracil-55 in the psi GC loop of transfer RNAs. The protein is tRNA pseudouridine synthase B of Methylobacillus flagellatus (strain ATCC 51484 / DSM 6875 / VKM B-1610 / KT).